The sequence spans 393 residues: Thyrotropin-releasing hormone receptor (393 aa).

Over 1 to 28 the chain is Extracellular; that stretch reads MENDTVSEMNQTELQPQAAVALEYQVVT. N-linked (GlcNAc...) asparagine glycans are attached at residues N3 and N10. The helical transmembrane segment at 29-51 threads the bilayer; it reads ILLVVIICGLGIVGNIMVVLVVM. At 52–61 the chain is on the cytoplasmic side; it reads RTKHMRTPTN. The helical transmembrane segment at 62-83 threads the bilayer; the sequence is CYLVSLAVADLMVLVAAGLPNI. Topologically, residues 84–99 are extracellular; that stretch reads TDSIYGSWVYGYVGCL. C98 and C179 form a disulfide bridge. A helical membrane pass occupies residues 100-121; the sequence is CITYLQYLGINASSCSITAFTI. Topologically, residues 122 to 144 are cytoplasmic; it reads ERYIAICHPIKAQFLCTFSRAKK. The chain crosses the membrane as a helical span at residues 145–168; the sequence is IIIFVWAFTSIYCMLWFFLLDLNI. The Extracellular portion of the chain corresponds to 169–193; the sequence is STYKNAVVVSCGYKISRNYYSPIYL. A helical membrane pass occupies residues 194-215; that stretch reads MDFGVFYVVPMILATVLYGFIA. The Cytoplasmic segment spans residues 216–266; sequence RILFLNPIPSDPKENSKMWKNDSIHQNKNLNLNATNRCFNSTVSSRKQVTK. A helical transmembrane segment spans residues 267–288; it reads MLAVVVILFALLWMPYRTLVVV. The Extracellular segment spans residues 289–296; it reads NSFLSSPF. The helical transmembrane segment at 297–319 threads the bilayer; that stretch reads QENWFLLFCRICIYLNSAINPVI. Residues 320-393 are Cytoplasmic-facing; the sequence is YNLMSQKFRA…FDDTCLASEN (74 aa).

Belongs to the G-protein coupled receptor 1 family.

The protein localises to the cell membrane. Its function is as follows. Receptor for thyrotropin-releasing hormone (TRH). Upon ligand binding, this G-protein-coupled receptor triggers activation of the phosphatidylinositol (IP3)-calcium-protein kinase C (PKC) pathway. The sequence is that of Thyrotropin-releasing hormone receptor (Trhr) from Mus musculus (Mouse).